The primary structure comprises 979 residues: UPF0182 protein MRA_0066 (979 aa).

The next 7 membrane-spanning stretches (helical) occupy residues 19–39, 63–83, 114–134, 174–194, 211–231, 260–280, and 288–308; these read LVTAGMGMLALLLFGPRLVDI, LAIVAAVALVVAGIVLAALLL, LFGWGIAVTLGVVCGLIASFD, WLFVAVVLAFLASLLTHYLFG, VQLAVFAGAVVLLKAVAYWLD, KLVLVAIAVLCAVSFFTAIFL, and MAAALLVLSAILVGGLWPLLM. The tract at residues 898 to 948 is disordered; sequence GTGRVATARGGDAASAPPPGAGGPAPPQAVPPPRTTQPPAAPPRGPDVPPA. Over residues 913–946 the composition is skewed to pro residues; the sequence is APPPGAGGPAPPQAVPPPRTTQPPAAPPRGPDVP.

The protein belongs to the UPF0182 family.

Its subcellular location is the cell membrane. The polypeptide is UPF0182 protein MRA_0066 (Mycobacterium tuberculosis (strain ATCC 25177 / H37Ra)).